The chain runs to 367 residues: Pyrimidine monooxygenase RutA (367 aa).

Residues 50–51 (IK), Asn-116, Glu-125, 141–142 (RY), and Ser-191 contribute to the FMN site.

This sequence belongs to the NtaA/SnaA/DszA monooxygenase family. RutA subfamily.

The enzyme catalyses uracil + FMNH2 + NADH + O2 = (Z)-3-ureidoacrylate + FMN + NAD(+) + H2O + H(+). The catalysed reaction is thymine + FMNH2 + NADH + O2 = (Z)-2-methylureidoacrylate + FMN + NAD(+) + H2O + H(+). Its function is as follows. Catalyzes the pyrimidine ring opening between N-3 and C-4 by an unusual flavin hydroperoxide-catalyzed mechanism, adding oxygen atoms in the process to yield ureidoacrylate peracid, that immediately reacts with FMN forming ureidoacrylate and FMN-N(5)-oxide. The FMN-N(5)-oxide reacts spontaneously with NADH to produce FMN. Requires the flavin reductase RutF to regenerate FMN in vivo. The sequence is that of Pyrimidine monooxygenase RutA from Allorhizobium ampelinum (strain ATCC BAA-846 / DSM 112012 / S4) (Agrobacterium vitis (strain S4)).